The primary structure comprises 335 residues: Rho guanine nucleotide exchange factor 39 (335 aa).

One can recognise a DH domain in the interval 22–197 (KRACTARELL…SETAQRVHTI (176 aa)). Residues 227 to 331 (WFLRQGWLLV…WYHSLTLAIS (105 aa)) form the PH domain.

The protein localises to the cell membrane. Functionally, promotes cell proliferation. This chain is Rho guanine nucleotide exchange factor 39 (ARHGEF39), found in Bos taurus (Bovine).